Consider the following 462-residue polypeptide: MSITKEFDTIAAISTPLGEGAIGIVRISGTDALKIASKIYRGLRGKDLSAIQSHTLNYGHIVDPDKNEILDEVMLGVMLAPKTFTREDVIEINTHGGIAVTNEILQLILATMDHNAEPGEFTKRAFLNGRVDLTQAEAVMDLIRAKTIKQWIYVSLKQLDGSLKTLINNTRQEILNTLAQVEVNIDYPEYDDVEEMTTTLMREKTQEFQALMENLLRTARRGKILREGLSTAKIGRPNVGKSQLLNNLLREEKAIVTDIEGTTRDVIEEYVNIKGVPLKLVDTAGIRDTDDIVEKIGVERSKKALEEADLVLLVLNSSEPLTLQDRSLLELSKESNRIVLLNKTDLPQKIEVNELPENVIPISVLENENIDKIEERINDIFFDNAGMVEHDATYLSNARHISLIEKAVDSLKAVNEGLELGMPVDLLQVDMTRTWEILGEITGDAAPDELITQLFSQFCLGK.

(6S)-5-formyl-5,6,7,8-tetrahydrofolate contacts are provided by R26, E91, and R130. The 155-residue stretch at 228-382 folds into the TrmE-type G domain; it reads GLSTAKIGRP…IEERINDIFF (155 aa). N238 is a K(+) binding site. GTP is bound by residues 238–243, 257–263, and 282–285; these read NVGKSQ, TDIEGTT, and DTAG. Residue S242 coordinates Mg(2+). Residues T257, I259, and T262 each contribute to the K(+) site. T263 provides a ligand contact to Mg(2+). K462 lines the (6S)-5-formyl-5,6,7,8-tetrahydrofolate pocket.

The protein belongs to the TRAFAC class TrmE-Era-EngA-EngB-Septin-like GTPase superfamily. TrmE GTPase family. Homodimer. Heterotetramer of two MnmE and two MnmG subunits. K(+) is required as a cofactor.

It localises to the cytoplasm. Exhibits a very high intrinsic GTPase hydrolysis rate. Involved in the addition of a carboxymethylaminomethyl (cmnm) group at the wobble position (U34) of certain tRNAs, forming tRNA-cmnm(5)s(2)U34. The sequence is that of tRNA modification GTPase MnmE from Streptococcus agalactiae.